The following is a 283-amino-acid chain: Bifunctional protein FolD (283 aa).

NADP(+) contacts are provided by residues 165-167 and serine 190; that span reads GAS.

This sequence belongs to the tetrahydrofolate dehydrogenase/cyclohydrolase family. In terms of assembly, homodimer.

The catalysed reaction is (6R)-5,10-methylene-5,6,7,8-tetrahydrofolate + NADP(+) = (6R)-5,10-methenyltetrahydrofolate + NADPH. The enzyme catalyses (6R)-5,10-methenyltetrahydrofolate + H2O = (6R)-10-formyltetrahydrofolate + H(+). It participates in one-carbon metabolism; tetrahydrofolate interconversion. Functionally, catalyzes the oxidation of 5,10-methylenetetrahydrofolate to 5,10-methenyltetrahydrofolate and then the hydrolysis of 5,10-methenyltetrahydrofolate to 10-formyltetrahydrofolate. The polypeptide is Bifunctional protein FolD (Cupriavidus pinatubonensis (strain JMP 134 / LMG 1197) (Cupriavidus necator (strain JMP 134))).